We begin with the raw amino-acid sequence, 72 residues long: Prokaryotic ubiquitin-like protein Pup (72 aa).

Residues M1–Q10 show a composition bias toward gly residues. The interval M1–S41 is disordered. Residues E21–E61 are a coiled coil. The ARC ATPase binding stretch occupies residues N28–Y66. Residues S31–S41 are compositionally biased toward basic and acidic residues. An Isoglutamyl lysine isopeptide (Glu-Lys) (interchain with K-? in acceptor proteins) cross-link involves residue E72.

The protein belongs to the prokaryotic ubiquitin-like protein family. Strongly interacts with the proteasome-associated ATPase ARC through a hydrophobic interface; the interacting region of Pup lies in its C-terminal half. There is one Pup binding site per ARC hexamer ring.

Its pathway is protein degradation; proteasomal Pup-dependent pathway. In terms of biological role, protein modifier that is covalently attached to lysine residues of substrate proteins, thereby targeting them for proteasomal degradation. The tagging system is termed pupylation. This is Prokaryotic ubiquitin-like protein Pup from Frankia alni (strain DSM 45986 / CECT 9034 / ACN14a).